A 117-amino-acid polypeptide reads, in one-letter code: Large ribosomal subunit protein uL18 (117 aa).

Belongs to the universal ribosomal protein uL18 family. Part of the 50S ribosomal subunit; part of the 5S rRNA/L5/L18/L25 subcomplex. Contacts the 5S and 23S rRNAs.

Its function is as follows. This is one of the proteins that bind and probably mediate the attachment of the 5S RNA into the large ribosomal subunit, where it forms part of the central protuberance. The polypeptide is Large ribosomal subunit protein uL18 (Haemophilus influenzae (strain 86-028NP)).